A 466-amino-acid chain; its full sequence is Asparagine--tRNA ligase (466 aa).

This sequence belongs to the class-II aminoacyl-tRNA synthetase family. In terms of assembly, homodimer.

The protein localises to the cytoplasm. It carries out the reaction tRNA(Asn) + L-asparagine + ATP = L-asparaginyl-tRNA(Asn) + AMP + diphosphate + H(+). The polypeptide is Asparagine--tRNA ligase (Shewanella baltica (strain OS155 / ATCC BAA-1091)).